The primary structure comprises 363 residues: Protein-arginine kinase (363 aa).

The 231-residue stretch at 24-254 (IVLSSRIRLA…AQLIEQERSA (231 aa)) folds into the Phosphagen kinase C-terminal domain. Residues 27-31 (SSRIR), histidine 92, arginine 125, 176-180 (RASVM), and 207-212 (RGIYGE) each bind ATP. Residues 337 to 342 (RDIRRA) carry the RDXXRA motif of the pArg binding pocket involved in allosteric regulation motif.

It belongs to the ATP:guanido phosphotransferase family.

The catalysed reaction is L-arginyl-[protein] + ATP = N(omega)-phospho-L-arginyl-[protein] + ADP + H(+). Appears to be allosterically activated by the binding of pArg-containing polypeptides to the pArg-binding pocket localized in the C-terminal domain of McsB. Catalyzes the specific phosphorylation of arginine residues in a large number of proteins. Is part of the bacterial stress response system. Protein arginine phosphorylation has a physiologically important role and is involved in the regulation of many critical cellular processes, such as protein homeostasis, motility, competence, and stringent and stress responses, by regulating gene expression and protein activity. The chain is Protein-arginine kinase from Bacillus licheniformis (strain ATCC 14580 / DSM 13 / JCM 2505 / CCUG 7422 / NBRC 12200 / NCIMB 9375 / NCTC 10341 / NRRL NRS-1264 / Gibson 46).